The primary structure comprises 455 residues: Ectonucleoside triphosphate diphosphohydrolase 6 (455 aa).

Residues 1–12 (MRKIPNHGTLRM) are Cytoplasmic-facing. The helical; Signal-anchor for type II membrane protein transmembrane segment at 13-32 (TKVAYPLGLCVGLFIYVAYI) threads the bilayer. Residues 33–455 (KWHRASAAQA…SLKRQKVPAL (423 aa)) lie on the Lumenal side of the membrane. N-linked (GlcNAc...) asparagine glycosylation is present at asparagine 192. Residue glutamate 196 is the Proton acceptor of the active site. An N-linked (GlcNAc...) asparagine glycan is attached at asparagine 256. 2 disulfides stabilise this stretch: cysteine 297-cysteine 327 and cysteine 387-cysteine 401.

Belongs to the GDA1/CD39 NTPase family. Requires Ca(2+) as cofactor. Mg(2+) is required as a cofactor. Post-translationally, might be cleaved at the N-terminus, retained in an intracellular membrane compartment and in addition be released into the extracellular medium. N-glycosylated. In terms of tissue distribution, expressed in heart and brain.

The protein resides in the golgi apparatus membrane. The protein localises to the secreted. It localises to the cell membrane. The catalysed reaction is a ribonucleoside 5'-diphosphate + H2O = a ribonucleoside 5'-phosphate + phosphate + H(+). The enzyme catalyses IDP + H2O = IMP + phosphate + H(+). It carries out the reaction GDP + H2O = GMP + phosphate + H(+). It catalyses the reaction UDP + H2O = UMP + phosphate + H(+). Functionally, catalyzes the hydrolysis of nucleoside triphosphates and diphosphates in a calcium- or magnesium-dependent manner. Has a strong preference for nucleoside diphosphates, preferentially hydrolyzes GDP, IDP, and UDP, with slower hydrolysis of CDP, ITP, GTP, CTP, ADP, and UTP and virtually no hydrolysis of ATP. The membrane bound form might support glycosylation reactions in the Golgi apparatus and, when released from cells, might catalyze the hydrolysis of extracellular nucleotides. This is Ectonucleoside triphosphate diphosphohydrolase 6 (Entpd6) from Rattus norvegicus (Rat).